The sequence spans 340 residues: Photosystem II protein D1 (340 aa).

The next 3 membrane-spanning stretches (helical) occupy residues 25-42 (YIGWFGLLVFPLLSLATV), 114-129 (HFFLGVCGWMGREWEF), and 138-152 (WIFVAFSAPIAAAAA). H114 provides a ligand contact to chlorophyll a. W122 is a binding site for pheophytin a. Positions 166 and 185 each coordinate [CaMn4O5] cluster. The chain crosses the membrane as a helical span at residues 193–214 (FHILGVAGVFGGSLFSAMHGSL). H194 contributes to the chlorophyll a binding site. A quinone is bound by residues H211 and 260–261 (SF). Residue H211 coordinates Fe cation. Position 268 (H268) interacts with Fe cation. The helical transmembrane segment at 270-284 (FLAAWPVIGIWITSL) threads the bilayer. Residues H328, E329, D338, and A340 each contribute to the [CaMn4O5] cluster site.

This sequence belongs to the reaction center PufL/M/PsbA/D family. In terms of assembly, PSII is composed of 1 copy each of membrane proteins PsbA, PsbB, PsbC, PsbD, PsbE, PsbF, PsbH, PsbI, PsbJ, PsbK, PsbL, PsbM, PsbT, PsbX, PsbY, PsbZ, Psb30/Ycf12, at least 3 peripheral proteins of the oxygen-evolving complex and a large number of cofactors. It forms dimeric complexes. Requires The D1/D2 heterodimer binds P680, chlorophylls that are the primary electron donor of PSII, and subsequent electron acceptors. It shares a non-heme iron and each subunit binds pheophytin, quinone, additional chlorophylls, carotenoids and lipids. D1 provides most of the ligands for the Mn4-Ca-O5 cluster of the oxygen-evolving complex (OEC). There is also a Cl(-1) ion associated with D1 and D2, which is required for oxygen evolution. The PSII complex binds additional chlorophylls, carotenoids and specific lipids. as cofactor. Post-translationally, tyr-157 forms a radical intermediate that is referred to as redox-active TyrZ, YZ or Y-Z.

It is found in the plastid. It localises to the chloroplast thylakoid membrane. The enzyme catalyses 2 a plastoquinone + 4 hnu + 2 H2O = 2 a plastoquinol + O2. Functionally, photosystem II (PSII) is a light-driven water:plastoquinone oxidoreductase that uses light energy to abstract electrons from H(2)O, generating O(2) and a proton gradient subsequently used for ATP formation. It consists of a core antenna complex that captures photons, and an electron transfer chain that converts photonic excitation into a charge separation. The D1/D2 (PsbA/PsbD) reaction center heterodimer binds P680, the primary electron donor of PSII as well as several subsequent electron acceptors. The polypeptide is Photosystem II protein D1 (Amphidinium carterae (Dinoflagellate)).